The sequence spans 182 residues: Large ribosomal subunit protein uL5 (182 aa).

Belongs to the universal ribosomal protein uL5 family. As to quaternary structure, part of the 50S ribosomal subunit; part of the 5S rRNA/L5/L18/L25 subcomplex. Contacts the 5S rRNA and the P site tRNA. Forms a bridge to the 30S subunit in the 70S ribosome.

This is one of the proteins that bind and probably mediate the attachment of the 5S RNA into the large ribosomal subunit, where it forms part of the central protuberance. In the 70S ribosome it contacts protein S13 of the 30S subunit (bridge B1b), connecting the 2 subunits; this bridge is implicated in subunit movement. Contacts the P site tRNA; the 5S rRNA and some of its associated proteins might help stabilize positioning of ribosome-bound tRNAs. This Leptospira interrogans serogroup Icterohaemorrhagiae serovar copenhageni (strain Fiocruz L1-130) protein is Large ribosomal subunit protein uL5.